An 892-amino-acid chain; its full sequence is UPF0182 protein Gura_0902 (892 aa).

7 helical membrane passes run 6–26, 50–70, 103–123, 158–178, 201–221, 248–268, and 271–291; these read FIII…LINF, VGAG…NLHF, LGIL…AMQW, MLKI…GAVY, LAVL…LNGC, ILTV…WQGA, and LALL…KAYP.

This sequence belongs to the UPF0182 family.

The protein resides in the cell membrane. The sequence is that of UPF0182 protein Gura_0902 from Geotalea uraniireducens (strain Rf4) (Geobacter uraniireducens).